The following is a 533-amino-acid chain: MEDSTEDIIKSFTLEQSPEIKPKPKSKTSDLTDIVYAMDDDSIKMKKFTIFDDKYDQNVSDSEHDLTPIKRKRQQQPPPPQQPSKFSSSIPQKPTLSPKKLASSPTKNYTDHINQLRSGPNSPKKYQEDENVRSLKYEIKRLKQEQNLKLENLQNKIEYLTKERDELQDQLTSMSFENDKLAKKNRSLSHENNHLTLENSKLKTKEYSNEDLQLEKNKLQRMNNTLRSERDELVKDFNLTRDKLKKYYDLYLHCQKNHVNVKSQRTEVGGDKPTADNISTNEELVDILRKLSEMMIDQNKMSEPIAAIEKDKPSEDKTSSPNFDSSKDAPRIVSEFLEEFIKRIVEEMSANSKSAPSSKQHINSEMYSQPNNFSNNTMPPSQSAAYIPSNSQPAPRPAAAAAANIYSSSTPNTNGYNQSSHSNDRPNTFELPRVERDHWTDRPPSERSTQSTKYMKMDPEEIRKLVVIITDQLKKEENNEKSSNTLDSETPIEKCQCCHGNPRNVNEPTNQKLCQSCLNKGDFTMSEFMGHSN.

Disordered stretches follow at residues 1-32 and 53-130; these read MEDS…SDLT and DKYD…QEDE. Composition is skewed to basic and acidic residues over residues 18-30 and 53-68; these read PEIK…KTSD and DKYD…DLTP. Over residues 83 to 94 the composition is skewed to low complexity; the sequence is PSKFSSSIPQKP. Residues 103-121 are compositionally biased toward polar residues; sequence SSPTKNYTDHINQLRSGPN. Residues 136-236 are a coiled coil; the sequence is KYEIKRLKQE…RSERDELVKD (101 aa). The span at 309–318 shows a compositional bias: basic and acidic residues; the sequence is EKDKPSEDKT. 2 disordered regions span residues 309-329 and 349-453; these read EKDK…SKDA and SANS…QSTK. Polar residues-rich tracts occupy residues 349–392 and 405–421; these read SANS…SNSQ and IYSS…QSSH. The segment covering 432–445 has biased composition (basic and acidic residues); sequence PRVERDHWTDRPPS.

The protein resides in the cytoplasm. It localises to the cytoskeleton. The protein localises to the microtubule organizing center. It is found in the spindle pole body. Its function is as follows. Plays a role in mitotic spindle pole body organization, possibly at the point of spindle pole body separation. Required for mitotic exit. The sequence is that of Spindle pole body protein CSA6 from Candida dubliniensis (strain CD36 / ATCC MYA-646 / CBS 7987 / NCPF 3949 / NRRL Y-17841) (Yeast).